The chain runs to 273 residues: Cytoplasmic phosphatidylinositol transfer protein 1 (273 aa).

A disordered region spans residues 244–273; sequence QAETNEKIHNTSGGANAAANAKEANDGDID.

It belongs to the PtdIns transfer protein family. PI transfer class IIB subfamily.

In terms of biological role, phosphatidylinositol transfer proteins mediate the monomeric transport of lipids by shielding a lipid from the aqueous environment and binding the lipid in a hydrophobic cavity. The polypeptide is Cytoplasmic phosphatidylinositol transfer protein 1 (rdgBbeta) (Drosophila melanogaster (Fruit fly)).